The primary structure comprises 191 residues: Elongation factor P (191 aa).

At Lys-34 the chain carries N6-(3,6-diaminohexanoyl)-5-hydroxylysine.

Belongs to the elongation factor P family. In terms of processing, may be beta-lysylated on the epsilon-amino group of Lys-34 by the combined action of EpmA and EpmB, and then hydroxylated on the C5 position of the same residue by EpmC (if this protein is present). Lysylation is critical for the stimulatory effect of EF-P on peptide-bond formation. The lysylation moiety may extend toward the peptidyltransferase center and stabilize the terminal 3-CCA end of the tRNA. Hydroxylation of the C5 position on Lys-34 may allow additional potential stabilizing hydrogen-bond interactions with the P-tRNA.

Its subcellular location is the cytoplasm. It functions in the pathway protein biosynthesis; polypeptide chain elongation. In terms of biological role, involved in peptide bond synthesis. Alleviates ribosome stalling that occurs when 3 or more consecutive Pro residues or the sequence PPG is present in a protein, possibly by augmenting the peptidyl transferase activity of the ribosome. Modification of Lys-34 is required for alleviation. The polypeptide is Elongation factor P (Colwellia psychrerythraea (strain 34H / ATCC BAA-681) (Vibrio psychroerythus)).